The chain runs to 421 residues: Type II methyltransferase M.TaqI (421 aa).

Positions 1 to 18 are enriched in low complexity; it reads MGLPPLLSLPSNSAPRSL. The tract at residues 1–20 is disordered; it reads MGLPPLLSLPSNSAPRSLGR. S-adenosyl-L-methionine contacts are provided by residues threonine 23, 45–48, glutamate 71, aspartate 89, and proline 107; that span reads EPAC.

The protein belongs to the N(4)/N(6)-methyltransferase family.

It carries out the reaction a 2'-deoxyadenosine in DNA + S-adenosyl-L-methionine = an N(6)-methyl-2'-deoxyadenosine in DNA + S-adenosyl-L-homocysteine + H(+). Its function is as follows. A gamma subtype methylase that recognizes the double-stranded sequence 5'-TCGA-3', methylates A-4 on both strands and protects the DNA from cleavage by the TaqI endonuclease. The chain is Type II methyltransferase M.TaqI (taqIM) from Thermus aquaticus.